The following is a 437-amino-acid chain: Ribosomal protein uS12 methylthiotransferase RimO (437 aa).

Residues 4 to 114 (PRVSFVSLGC…VMAAVHEAAP (111 aa)) form the MTTase N-terminal domain. The [4Fe-4S] cluster site is built by Cys-13, Cys-49, Cys-78, Cys-145, Cys-149, and Cys-152. The Radical SAM core domain maps to 131-369 (LTPRHYAYLK…MQRQQKISAT (239 aa)). The TRAM domain occupies 372 to 437 (AKKVGKRLPV…DAYDLYGSAV (66 aa)).

This sequence belongs to the methylthiotransferase family. RimO subfamily. Requires [4Fe-4S] cluster as cofactor.

Its subcellular location is the cytoplasm. It carries out the reaction L-aspartate(89)-[ribosomal protein uS12]-hydrogen + (sulfur carrier)-SH + AH2 + 2 S-adenosyl-L-methionine = 3-methylsulfanyl-L-aspartate(89)-[ribosomal protein uS12]-hydrogen + (sulfur carrier)-H + 5'-deoxyadenosine + L-methionine + A + S-adenosyl-L-homocysteine + 2 H(+). Catalyzes the methylthiolation of an aspartic acid residue of ribosomal protein uS12. The protein is Ribosomal protein uS12 methylthiotransferase RimO of Mesorhizobium japonicum (strain LMG 29417 / CECT 9101 / MAFF 303099) (Mesorhizobium loti (strain MAFF 303099)).